The chain runs to 775 residues: Glutamine--tRNA ligase (775 aa).

Position 2 is an N-acetylalanine (Ala2). The residue at position 70 (Ser70) is a Phosphoserine. Positions 270 to 280 (PEPNGILHIGH) match the 'HIGH' region motif. ATP is bound by residues 271-273 (EPN) and 277-283 (HIGHAKA). Asp303 provides a ligand contact to L-glutamine. An N6-acetyllysine modification is found at Lys309. Tyr438 is an L-glutamine binding site. ATP is bound by residues Thr457, 486-487 (RL), and 494-496 (VSK). Positions 493–497 (VVSKR) match the 'KMSKS' region motif. Ser495 carries the post-translational modification Phosphoserine.

It belongs to the class-I aminoacyl-tRNA synthetase family. In terms of assembly, monomer. Part of a multisubunit complex that groups tRNA ligases for Arg (RARS1), Asp (DARS1), Gln (QARS1), Ile (IARS1), Leu (LARS1), Lys (KARS1), Met (MARS1) the bifunctional ligase for Glu and Pro (EPRS1) and the auxiliary subunits AIMP1/p43, AIMP2/p38 and EEF1E1/p18. Interacts with RARS1. Part of a complex composed of RARS1, QARS1 and AIMP1.

Its subcellular location is the cytoplasm. It localises to the cytosol. It catalyses the reaction tRNA(Gln) + L-glutamine + ATP = L-glutaminyl-tRNA(Gln) + AMP + diphosphate. Its function is as follows. Glutamine--tRNA ligase. Plays a critical role in brain development. The chain is Glutamine--tRNA ligase (QARS1) from Bos taurus (Bovine).